The following is a 562-amino-acid chain: Arginine--tRNA ligase (562 aa).

Residues 130–140 (ANPTGPLHIGH) carry the 'HIGH' region motif.

Belongs to the class-I aminoacyl-tRNA synthetase family. As to quaternary structure, monomer.

It is found in the cytoplasm. It catalyses the reaction tRNA(Arg) + L-arginine + ATP = L-arginyl-tRNA(Arg) + AMP + diphosphate. In Geobacter metallireducens (strain ATCC 53774 / DSM 7210 / GS-15), this protein is Arginine--tRNA ligase.